We begin with the raw amino-acid sequence, 455 residues long: Bifunctional protein GlmU (455 aa).

Residues 1 to 232 form a pyrophosphorylase region; that stretch reads MASTTGALIL…DPNLLGVNNP (232 aa). UDP-N-acetyl-alpha-D-glucosamine is bound by residues 10-13, Lys-24, Gln-75, and 80-81; these read LAAG and GT. Residue Asp-106 coordinates Mg(2+). Residues Gly-141, Glu-155, Asn-172, and Asn-230 each contribute to the UDP-N-acetyl-alpha-D-glucosamine site. Asn-230 provides a ligand contact to Mg(2+). The segment at 233-253 is linker; the sequence is AELIRSEALLRTRLVIGHIEG. Residues 254-455 form an N-acetyltransferase region; sequence GVLIHAPETV…QTNLPRKPKA (202 aa). UDP-N-acetyl-alpha-D-glucosamine contacts are provided by Arg-336 and Lys-354. The active-site Proton acceptor is His-366. The UDP-N-acetyl-alpha-D-glucosamine site is built by Tyr-369 and Asn-380. Residues Ala-383, 389 to 390, Ser-408, Ala-426, and Arg-443 each bind acetyl-CoA; that span reads NY.

This sequence in the N-terminal section; belongs to the N-acetylglucosamine-1-phosphate uridyltransferase family. It in the C-terminal section; belongs to the transferase hexapeptide repeat family. In terms of assembly, homotrimer. Mg(2+) serves as cofactor.

The protein resides in the cytoplasm. The enzyme catalyses alpha-D-glucosamine 1-phosphate + acetyl-CoA = N-acetyl-alpha-D-glucosamine 1-phosphate + CoA + H(+). It catalyses the reaction N-acetyl-alpha-D-glucosamine 1-phosphate + UTP + H(+) = UDP-N-acetyl-alpha-D-glucosamine + diphosphate. The protein operates within nucleotide-sugar biosynthesis; UDP-N-acetyl-alpha-D-glucosamine biosynthesis; N-acetyl-alpha-D-glucosamine 1-phosphate from alpha-D-glucosamine 6-phosphate (route II): step 2/2. It functions in the pathway nucleotide-sugar biosynthesis; UDP-N-acetyl-alpha-D-glucosamine biosynthesis; UDP-N-acetyl-alpha-D-glucosamine from N-acetyl-alpha-D-glucosamine 1-phosphate: step 1/1. It participates in bacterial outer membrane biogenesis; LPS lipid A biosynthesis. Catalyzes the last two sequential reactions in the de novo biosynthetic pathway for UDP-N-acetylglucosamine (UDP-GlcNAc). The C-terminal domain catalyzes the transfer of acetyl group from acetyl coenzyme A to glucosamine-1-phosphate (GlcN-1-P) to produce N-acetylglucosamine-1-phosphate (GlcNAc-1-P), which is converted into UDP-GlcNAc by the transfer of uridine 5-monophosphate (from uridine 5-triphosphate), a reaction catalyzed by the N-terminal domain. This Nitratidesulfovibrio vulgaris (strain ATCC 29579 / DSM 644 / CCUG 34227 / NCIMB 8303 / VKM B-1760 / Hildenborough) (Desulfovibrio vulgaris) protein is Bifunctional protein GlmU.